The primary structure comprises 132 residues: Interleukin-13 (132 aa).

Residues 1-18 form the signal peptide; that stretch reads MALLLTAVIVLICFGGLT. Asn38, Asn49, Asn57, and Asn75 each carry an N-linked (GlcNAc...) asparagine glycan. Cystine bridges form between Cys48–Cys76 and Cys64–Cys90.

Belongs to the IL-4/IL-13 family. In terms of assembly, interacts with IL13RA2.

It is found in the secreted. In terms of biological role, cytokine that plays important roles in allergic inflammation and immune response to parasite infection. Synergizes with IL2 in regulating interferon-gamma synthesis. Stimulates B-cell proliferation, and activation of eosinophils, basophils, and mast cells. Plays an important role in controlling IL33 activity by modulating the production of transmembrane and soluble forms of interleukin-1 receptor-like 1/IL1RL1. Displays the capacity to antagonize Th1-driven proinflammatory immune response and downregulates synthesis of many proinflammatory cytokines including IL1, IL6, IL10, IL12 and TNF-alpha through a mechanism that partially involves suppression of NF-kappa-B. Also functions on nonhematopoietic cells, including endothelial cells where it induces vascular cell adhesion protein 1/VCAM1, which is important in the recruitment of eosinophils. Exerts its biological effects through its receptors which comprises the IL4R chain and the IL13RA1 chain, to activate JAK1 and TYK2, leading to the activation of STAT6. Aside from IL13RA1, another receptor IL13RA2 acts as a high affinity decoy for IL13 and mediates internalization and depletion of extracellular IL13. This chain is Interleukin-13 (IL13), found in Bos taurus (Bovine).